Consider the following 490-residue polypeptide: Betaine aldehyde dehydrogenase (490 aa).

Asp-93 is a K(+) binding site. 150–152 (GAW) lines the NAD(+) pocket. The active-site Charge relay system is Lys-162. NAD(+) is bound at residue 176–179 (KPSE). Val-180 serves as a coordination point for K(+). 230 to 233 (GIAS) is an NAD(+) binding site. Leu-246 contributes to the K(+) binding site. Catalysis depends on Glu-252, which acts as the Proton acceptor. NAD(+)-binding residues include Gly-254, Cys-286, and Glu-387. Cys-286 (nucleophile) is an active-site residue. Cys-286 carries the post-translational modification Cysteine sulfenic acid (-SOH). The K(+) site is built by Lys-457 and Gly-460. The active-site Charge relay system is the Glu-464.

This sequence belongs to the aldehyde dehydrogenase family. As to quaternary structure, dimer of dimers. Requires K(+) as cofactor.

It catalyses the reaction betaine aldehyde + NAD(+) + H2O = glycine betaine + NADH + 2 H(+). The protein operates within amine and polyamine biosynthesis; betaine biosynthesis via choline pathway; betaine from betaine aldehyde: step 1/1. Involved in the biosynthesis of the osmoprotectant glycine betaine. Catalyzes the irreversible oxidation of betaine aldehyde to the corresponding acid. The polypeptide is Betaine aldehyde dehydrogenase (Pectobacterium atrosepticum (strain SCRI 1043 / ATCC BAA-672) (Erwinia carotovora subsp. atroseptica)).